We begin with the raw amino-acid sequence, 152 residues long: Single-stranded DNA-binding protein, mitochondrial (152 aa).

The N-terminal 16 residues, 1–16 (MFRRPVLQVFRQFVRH), are a transit peptide targeting the mitochondrion. Residues 30–141 (LNRVQLLGRV…IIAGKKLVVH (112 aa)) enclose the SSB domain. A phosphoserine mark is found at S67 and S79. K113 carries the post-translational modification N6-acetyllysine. At K122 the chain carries N6-succinyllysine.

As to quaternary structure, homotetramer. Interacts with MPG/AAG, through inhibition of its glycosylase activity it potentially prevents formation of DNA breaks in ssDNA, ensuring that base removal primarily occurs in dsDNA. Interacts with POLDIP2. Interacts with PRIMPOL. Expressed in all the layers of the retina (at protein level).

Its subcellular location is the mitochondrion. The protein resides in the mitochondrion matrix. The protein localises to the mitochondrion nucleoid. Functionally, binds preferentially and cooperatively to pyrimidine rich single-stranded DNA (ss-DNA). In vitro, required to maintain the copy number of mitochondrial DNA (mtDNA) and plays a crucial role during mtDNA replication by stimulating the activity of the replisome components POLG and TWNK at the replication fork. Promotes the activity of the gamma complex polymerase POLG, largely by organizing the template DNA and eliminating secondary structures to favor ss-DNA conformations that facilitate POLG activity. In addition it is able to promote the 5'-3' unwinding activity of the mtDNA helicase TWNK. May also function in mtDNA repair. This Mus musculus (Mouse) protein is Single-stranded DNA-binding protein, mitochondrial (Ssbp1).